The following is a 22-amino-acid chain: uncharacterized protein (22 aa).

The tract at residues 1 to 22 (MHNSIAYDKDGNSTGQKYYAYG) is disordered.

This is an uncharacterized protein from Lactobacillus helveticus (Lactobacillus suntoryeus).